A 31-amino-acid chain; its full sequence is Cytochrome b6-f complex subunit 6 (31 aa).

A helical transmembrane segment spans residues 4 to 26 (ITSYFGFLLAALTITSALLIGLN).

This sequence belongs to the PetL family. In terms of assembly, the 4 large subunits of the cytochrome b6-f complex are cytochrome b6, subunit IV (17 kDa polypeptide, PetD), cytochrome f and the Rieske protein, while the 4 small subunits are PetG, PetL, PetM and PetN. The complex functions as a dimer.

It is found in the plastid. It localises to the chloroplast thylakoid membrane. In terms of biological role, component of the cytochrome b6-f complex, which mediates electron transfer between photosystem II (PSII) and photosystem I (PSI), cyclic electron flow around PSI, and state transitions. PetL is important for photoautotrophic growth as well as for electron transfer efficiency and stability of the cytochrome b6-f complex. The sequence is that of Cytochrome b6-f complex subunit 6 from Amborella trichopoda.